The sequence spans 104 residues: Phosphoribosyl-ATP pyrophosphatase (104 aa).

This sequence belongs to the PRA-PH family.

The protein resides in the cytoplasm. It carries out the reaction 1-(5-phospho-beta-D-ribosyl)-ATP + H2O = 1-(5-phospho-beta-D-ribosyl)-5'-AMP + diphosphate + H(+). It functions in the pathway amino-acid biosynthesis; L-histidine biosynthesis; L-histidine from 5-phospho-alpha-D-ribose 1-diphosphate: step 2/9. The chain is Phosphoribosyl-ATP pyrophosphatase from Methanocorpusculum labreanum (strain ATCC 43576 / DSM 4855 / Z).